Consider the following 504-residue polypeptide: MTVRVRVAPSPTGDPHVGTAYMSLFNLAFARRHGGAFVLRIEDTDRSRYVADSEQQIFDSLRWLGLDWDEGPDKGGPYGPYRQSERLDTYRPYVDQLLASGHAYYCWCSPERLAAMREEQQRRRQPPGYDRLCYGKTREERARLGGFSERPVVRMLIPDDVPLTFPDLIRGQVSAPRPDDQVILKADGFPTYHFAVVVDDHLMAITHVVRGEEWISSTPKHLLLYDWLGWPRPQFAHMPLLRNPDKSKISKRKNPAARLLWFKEQGYLPEALRNFLALMGYSMPDGREVFSFDEMVAEFDWSRVNPVGPVFDVTKLDWLNGHYIRSLPVDDLAERLIPYLQEARLIGTPVTPREDALLRAAAPLVQERIAHLTEAAELLAFLLRPEEEFGIEPDAAQRVLGRDAAASLRAAIDALEPLADWTASAIHAALQAALVDGLGLKPRHAFTPVRVAITGRTVSPPLFESMELLGRDRSLARLRRAAAIADAGGADSAGVGPGSAVRTD.

Residues 9 to 19 (PSPTGDPHVGT) carry the 'HIGH' region motif. Residues 248–252 (KISKR) carry the 'KMSKS' region motif. Lys-251 contacts ATP.

This sequence belongs to the class-I aminoacyl-tRNA synthetase family. Glutamate--tRNA ligase type 1 subfamily. Monomer.

The protein resides in the cytoplasm. The enzyme catalyses tRNA(Glu) + L-glutamate + ATP = L-glutamyl-tRNA(Glu) + AMP + diphosphate. Catalyzes the attachment of glutamate to tRNA(Glu) in a two-step reaction: glutamate is first activated by ATP to form Glu-AMP and then transferred to the acceptor end of tRNA(Glu). The sequence is that of Glutamate--tRNA ligase from Acidothermus cellulolyticus (strain ATCC 43068 / DSM 8971 / 11B).